The following is a 284-amino-acid chain: MYVVSTKQMLNNAQRGGYAVPAFNIHNLETMQVVVETAASMHAPVIIAGTPGTFTHAGTENLMALVSAMAKQYHHPLAIHLDHHTKFDDIAQKVRSGVRSVMIDASHLPFAQNISRVKEVVDFCHRFDVSVEAELGQLGGQEDDVQVNEADAFYTNPAQAREFAEATGIDSLAVAIGTAHGMYASAPALDFSRLENIRQWVNLPLVLHGASGLSTKDIQQTIKLGICKINVATELKNAFSQALKNYLTEHPEATDPRDYLQSAKSAMRDVVSKVIADCGCEGRA.

Residue Asp82 is the Proton donor of the active site. Zn(2+) contacts are provided by His83 and His180. Gly181 contributes to the dihydroxyacetone phosphate binding site. Position 208 (His208) interacts with Zn(2+). Residues 209–211 (GAS) and 230–233 (NVAT) each bind dihydroxyacetone phosphate.

Belongs to the class II fructose-bisphosphate aldolase family. TagBP aldolase GatY subfamily. Forms a complex with GatZ. Zn(2+) serves as cofactor.

It carries out the reaction D-tagatofuranose 1,6-bisphosphate = D-glyceraldehyde 3-phosphate + dihydroxyacetone phosphate. It functions in the pathway carbohydrate metabolism; D-tagatose 6-phosphate degradation; D-glyceraldehyde 3-phosphate and glycerone phosphate from D-tagatose 6-phosphate: step 2/2. Functionally, catalytic subunit of the tagatose-1,6-bisphosphate aldolase GatYZ, which catalyzes the reversible aldol condensation of dihydroxyacetone phosphate (DHAP or glycerone-phosphate) with glyceraldehyde 3-phosphate (G3P) to produce tagatose 1,6-bisphosphate (TBP). Requires GatZ subunit for full activity and stability. Is involved in the catabolism of galactitol. This Escherichia coli O7:K1 (strain IAI39 / ExPEC) protein is D-tagatose-1,6-bisphosphate aldolase subunit GatY.